Reading from the N-terminus, the 191-residue chain is Putative glutathione-dependent formaldehyde-activating enzyme (191 aa).

Residues 20–166 (FAGGNLYCKC…FKAVGLETYD (147 aa)) enclose the CENP-V/GFA domain. Residues C27, C29, C48, C50, C53, C95, and C98 each contribute to the Zn(2+) site.

This sequence belongs to the Gfa family. Requires Zn(2+) as cofactor.

The enzyme catalyses S-(hydroxymethyl)glutathione = glutathione + formaldehyde. The protein operates within one-carbon metabolism; formaldehyde degradation; formate from formaldehyde (glutathione route): step 1/3. In terms of biological role, catalyzes the condensation of formaldehyde and glutathione to S-hydroxymethylglutathione. The polypeptide is Putative glutathione-dependent formaldehyde-activating enzyme (Aspergillus terreus (strain NIH 2624 / FGSC A1156)).